We begin with the raw amino-acid sequence, 358 residues long: uncharacterized protein (358 aa).

The N-terminal stretch at 1–15 (MITGKTISLPLSVIA) is a signal peptide. Residue Cys-16 is the site of N-palmitoyl cysteine attachment. Cys-16 is lipidated: S-diacylglycerol cysteine. Positions 331–358 (PCGTGSPGNPPPNINSVAQHRISTNTNR) are disordered. Positions 347–358 (VAQHRISTNTNR) are enriched in polar residues.

The protein localises to the cell membrane. This is an uncharacterized protein from Sinorhizobium fredii (strain NBRC 101917 / NGR234).